The primary structure comprises 325 residues: Isoaspartyl peptidase/L-asparaginase (325 aa).

Catalysis depends on T193, which acts as the Nucleophile. Substrate is bound by residues 221-224 and 243-246; these read RIGD and TGKG.

It belongs to the Ntn-hydrolase family. As to quaternary structure, heterotetramer of two alpha and two beta chains arranged as a dimer of alpha/beta heterodimers. Post-translationally, cleaved into an alpha and beta chain by autocatalysis; this activates the enzyme. The N-terminal residue of the beta subunit is responsible for the nucleophile hydrolase activity. As to expression, developing seeds.

It carries out the reaction Cleavage of a beta-linked Asp residue from the N-terminus of a polypeptide.. Functionally, acts in asparagine catabolism but also in the final steps of protein degradation via hydrolysis of a range of isoaspartyl dipeptides. The polypeptide is Isoaspartyl peptidase/L-asparaginase (Lupinus angustifolius (Narrow-leaved blue lupine)).